A 336-amino-acid chain; its full sequence is PTS system glucitol/sorbitol-specific EIIB component (336 aa).

A PTS EIIB type-5 domain is found at 3 to 195 (KYNAIKIVKG…AVQSMITTIL (193 aa)). Cys-75 (phosphocysteine intermediate; for EIIB activity) is an active-site residue. Cys-75 bears the Phosphocysteine; by EIIA mark. 5 helical membrane passes run 194–214 (ILPFMAFVAMLIGIIQGSGFG), 228–248 (GIGLMILGFICSIPLLSALLG), 250–270 (GAVIAQIVGTLIGVEIGKGTI), 278–298 (ALFAINTQCACDFIPVGLGLA), and 312–332 (VLYSRFMIGVPRVAVAWVASI).

The protein resides in the cell membrane. It carries out the reaction D-sorbitol(out) + N(pros)-phospho-L-histidyl-[protein] = D-sorbitol 6-phosphate(in) + L-histidyl-[protein]. Its function is as follows. The phosphoenolpyruvate-dependent sugar phosphotransferase system (sugar PTS), a major carbohydrate active transport system, catalyzes the phosphorylation of incoming sugar substrates concomitantly with their translocation across the cell membrane. The enzyme II complex composed of SrlA, SrlB and SrlE is involved in glucitol/sorbitol transport. This is PTS system glucitol/sorbitol-specific EIIB component (srlE) from Clostridium beijerinckii (strain ATCC 51743 / NCIMB 8052) (Clostridium acetobutylicum).